The chain runs to 547 residues: Chaperonin GroEL (547 aa).

ATP-binding positions include 30 to 33, lysine 51, 87 to 91, glycine 415, and aspartate 496; these read TLGP and DGTTT.

It belongs to the chaperonin (HSP60) family. Forms a cylinder of 14 subunits composed of two heptameric rings stacked back-to-back. Interacts with the co-chaperonin GroES.

It localises to the cytoplasm. It catalyses the reaction ATP + H2O + a folded polypeptide = ADP + phosphate + an unfolded polypeptide.. In terms of biological role, together with its co-chaperonin GroES, plays an essential role in assisting protein folding. The GroEL-GroES system forms a nano-cage that allows encapsulation of the non-native substrate proteins and provides a physical environment optimized to promote and accelerate protein folding. The sequence is that of Chaperonin GroEL from Actinobacillus pleuropneumoniae serotype 7 (strain AP76).